Here is a 151-residue protein sequence, read N- to C-terminus: Deoxyuridine 5'-triphosphate nucleotidohydrolase (151 aa).

Residues 70 to 72, N83, 87 to 89, and M97 contribute to the substrate site; these read RSG and LID.

This sequence belongs to the dUTPase family. Requires Mg(2+) as cofactor.

The enzyme catalyses dUTP + H2O = dUMP + diphosphate + H(+). It functions in the pathway pyrimidine metabolism; dUMP biosynthesis; dUMP from dCTP (dUTP route): step 2/2. Its function is as follows. This enzyme is involved in nucleotide metabolism: it produces dUMP, the immediate precursor of thymidine nucleotides and it decreases the intracellular concentration of dUTP so that uracil cannot be incorporated into DNA. In Histophilus somni (strain 129Pt) (Haemophilus somnus), this protein is Deoxyuridine 5'-triphosphate nucleotidohydrolase.